We begin with the raw amino-acid sequence, 53 residues long: Large ribosomal subunit protein eL40 (53 aa).

The protein belongs to the eukaryotic ribosomal protein eL40 family.

In Pyrobaculum arsenaticum (strain DSM 13514 / JCM 11321 / PZ6), this protein is Large ribosomal subunit protein eL40.